The sequence spans 116 residues: Evasin P1180 (116 aa).

Positions 1–25 (MARNWSFRVIFVSAMWCALLKFATL) are cleaved as a signal peptide. Intrachain disulfides connect C38-C58, C54-C95, C71-C100, and C90-C109. N45, N73, and N104 each carry an N-linked (GlcNAc...) asparagine glycan.

It is found in the secreted. In terms of biological role, salivary chemokine-binding protein which binds to host chemokines CCL2, CCL3, CCL4, CCL8 and CCL18. The sequence is that of Evasin P1180 from Amblyomma triste (Neotropical tick).